We begin with the raw amino-acid sequence, 474 residues long: Probable periplasmic serine endoprotease DegP-like (474 aa).

The first 25 residues, 1 to 25 (MRNLKSVTPLLMAALLWGQSLLAQA), serve as a signal peptide directing secretion. Active-site charge relay system residues include H113, D143, and S216. Residues 214-216 (GNS) and 271-275 (LGVVI) each bind substrate. 2 consecutive PDZ domains span residues 260–351 (LKAD…VRDG) and 357–463 (KVTI…LRQG).

Belongs to the peptidase S1C family.

Its subcellular location is the periplasm. The catalysed reaction is Acts on substrates that are at least partially unfolded. The cleavage site P1 residue is normally between a pair of hydrophobic residues, such as Val-|-Val.. In terms of biological role, might be efficient in the degradation of transiently denatured and unfolded proteins which accumulate in the periplasm following stress conditions. The chain is Probable periplasmic serine endoprotease DegP-like from Ectopseudomonas mendocina (strain ymp) (Pseudomonas mendocina).